The following is a 315-amino-acid chain: Adenine deaminase (315 aa).

Residues His-14, His-16, and His-194 each contribute to the Zn(2+) site. Catalysis depends on Glu-197, which acts as the Proton donor. Asp-275 is a Zn(2+) binding site. Residue Asp-276 coordinates substrate.

Belongs to the metallo-dependent hydrolases superfamily. Adenosine and AMP deaminases family. Adenine deaminase type 2 subfamily. Requires Zn(2+) as cofactor.

It catalyses the reaction adenine + H2O + H(+) = hypoxanthine + NH4(+). In terms of biological role, catalyzes the hydrolytic deamination of adenine to hypoxanthine. Plays an important role in the purine salvage pathway and in nitrogen catabolism. This is Adenine deaminase from Pseudomonas putida (strain W619).